Consider the following 160-residue polypeptide: Lymphocyte antigen 96 (160 aa).

The N-terminal stretch at 1 to 18 (MLPFLFFSTLFSSIFTEA) is a signal peptide. 3 cysteine pairs are disulfide-bonded: Cys25/Cys51, Cys37/Cys148, and Cys95/Cys105. A glycan (N-linked (GlcNAc...) asparagine) is linked at Asn26. Asn114 carries N-linked (GlcNAc...) asparagine glycosylation. The tract at residues 119-123 (FSFKG) is interaction with lipopolysaccharide.

In terms of assembly, heterogeneous homomer formed from homodimers; disulfide-linked. Belongs to the lipopolysaccharide (LPS) receptor, a multi-protein complex containing at least CD14, LY96 and TLR4. Binds to the extracellular domains of TLR2 and TLR4. Ligand binding induces interaction with TLR4 and oligomerization of the complex. In terms of processing, N-glycosylated; high-mannose.

The protein localises to the secreted. It localises to the extracellular space. Binds bacterial lipopolysaccharide (LPS). Cooperates with TLR4 in the innate immune response to bacterial lipopolysaccharide (LPS), and with TLR2 in the response to cell wall components from Gram-positive and Gram-negative bacteria. Enhances TLR4-dependent activation of NF-kappa-B. Cells expressing both LY96 and TLR4, but not TLR4 alone, respond to LPS. The polypeptide is Lymphocyte antigen 96 (LY96) (Homo sapiens (Human)).